Here is a 128-residue protein sequence, read N- to C-terminus: Fluoride-specific ion channel FluC (128 aa).

Transmembrane regions (helical) follow at residues 3-23 (LYAL…RWWF), 33-53 (TLPL…GAAI), 69-89 (FAIT…AETV), and 99-119 (WTFV…ILGI). Na(+)-binding residues include glycine 76 and threonine 79.

This sequence belongs to the fluoride channel Fluc/FEX (TC 1.A.43) family.

The protein localises to the cell inner membrane. The enzyme catalyses fluoride(in) = fluoride(out). With respect to regulation, na(+) is not transported, but it plays an essential structural role and its presence is essential for fluoride channel function. In terms of biological role, fluoride-specific ion channel. Important for reducing fluoride concentration in the cell, thus reducing its toxicity. This is Fluoride-specific ion channel FluC from Nitrosospira multiformis (strain ATCC 25196 / NCIMB 11849 / C 71).